Here is a 546-residue protein sequence, read N- to C-terminus: MKETNTQPLLSVRDLSVAFHQGGATSVAVDHVSFDLMPGEVVALVGESGSGKSVTANSILKLLPYPAASHPSGKILFDGKDMLTLPERALRAVRGNDITMIFQEPMTSLNPLHTIERQIGEILELHQAITGAEARQRTLELLLQVGIREPEKRLKAYPHELSGGQRQRVMIAMALANRPKLLIADEPTTALDVTVQAQILELLGDLKTQHGMSMLFITHDLGIVRKFADRVCVMTKGKIVETGTVEQVFTDPQHAYTRHLLAAEPKGEPPHSDASKPVVMQGDDIKVWFPIKAGLMRRVIDHVKAVDGIDITLRAGQTVGVVGESGSGKTTLGLALSRLIASKGRISFIGQSIDSYSYEMMKPLRNRLQVVFQDPYGSLSPRMSVGEIIAEGLKVHERSLSADERDTRVATALEEVGLDPATRWRYPHEFSGGQRQRIAIARAMVLKPRFVMLDEPTSALDMSVQAQVVDLLRDLQAKHELAYLFISHDLRVVKALANDLIVMRHGKVVESGPAAEIFANPQQDYTKALLAAAFNIEAVETKAVSQ.

ABC transporter domains are found at residues V12–L261 and I291–L530. Residues G46–S53 and G323–T330 contribute to the ATP site.

Belongs to the ABC transporter superfamily. In terms of assembly, the complex is composed of one ATP-binding protein (YejF), two transmembrane proteins (YejB and YejE) and a solute-binding protein (YepA or YejA).

The protein resides in the cell inner membrane. Functionally, part of the ABC transporter complex YejBEF-YepA involved in the uptake of muropeptides, the breakdown products of cell wall peptidoglycan. The import of muropeptides into the cell enables peptidoglycan recycling, which is vital for cell wall integrity in this bacterium. Is also probably part of the ABC transporter complex YejABEF, which is likely involved in broad-spectrum peptide import. Responsible for energy coupling to the transport system. The protein is Peptidoglycan transport ATP-binding protein YejF of Agrobacterium fabrum (strain C58 / ATCC 33970) (Agrobacterium tumefaciens (strain C58)).